Reading from the N-terminus, the 336-residue chain is Ketol-acid reductoisomerase (NADP(+)) (336 aa).

Residues 2-181 (AKVYYEKDVM…GATRAGVLET (180 aa)) form the KARI N-terminal Rossmann domain. NADP(+) contacts are provided by residues 25 to 28 (YGSQ), Arg-48, Ser-52, and 82 to 85 (DELQ). His-107 is a catalytic residue. Residue Gly-133 coordinates NADP(+). The KARI C-terminal knotted domain maps to 182–327 (TFKEETETDL…RQLREMMPFV (146 aa)). The Mg(2+) site is built by Asp-190, Glu-194, Glu-226, and Glu-230. Ser-251 serves as a coordination point for substrate.

It belongs to the ketol-acid reductoisomerase family. Mg(2+) serves as cofactor.

The enzyme catalyses (2R)-2,3-dihydroxy-3-methylbutanoate + NADP(+) = (2S)-2-acetolactate + NADPH + H(+). The catalysed reaction is (2R,3R)-2,3-dihydroxy-3-methylpentanoate + NADP(+) = (S)-2-ethyl-2-hydroxy-3-oxobutanoate + NADPH + H(+). Its pathway is amino-acid biosynthesis; L-isoleucine biosynthesis; L-isoleucine from 2-oxobutanoate: step 2/4. The protein operates within amino-acid biosynthesis; L-valine biosynthesis; L-valine from pyruvate: step 2/4. Functionally, involved in the biosynthesis of branched-chain amino acids (BCAA). Catalyzes an alkyl-migration followed by a ketol-acid reduction of (S)-2-acetolactate (S2AL) to yield (R)-2,3-dihydroxy-isovalerate. In the isomerase reaction, S2AL is rearranged via a Mg-dependent methyl migration to produce 3-hydroxy-3-methyl-2-ketobutyrate (HMKB). In the reductase reaction, this 2-ketoacid undergoes a metal-dependent reduction by NADPH to yield (R)-2,3-dihydroxy-isovalerate. The protein is Ketol-acid reductoisomerase (NADP(+)) of Bacillus cytotoxicus (strain DSM 22905 / CIP 110041 / 391-98 / NVH 391-98).